A 191-amino-acid chain; its full sequence is Putative inactive glutathione hydrolase 4 (191 aa).

The active-site Nucleophile is the Thr54. L-glutamate contacts are provided by residues Thr72, Asn74, Glu93, Asp96, 126 to 127, and 147 to 148; these read SS and GG.

Belongs to the gamma-glutamyltransferase family. Expressed at low levels in embryo, roots and leaves. In mature plants, expression is restricted to vascular tissues of roots, leaves, flowers and siliques.

This chain is Putative inactive glutathione hydrolase 4 (GGT4), found in Arabidopsis thaliana (Mouse-ear cress).